An 814-amino-acid chain; its full sequence is Testis-specific zinc finger protein topi (814 aa).

10 consecutive C2H2-type zinc fingers follow at residues 228–250 (NECT…MEKH), 275–297 (VKCN…GLIH), 360–382 (LQCE…SASH), 429–453 (FVCN…TSFH), 467–490 (LPCD…EEKH), 511–533 (YLCD…LRFH), 539–564 (FVCQ…RKCH), 570–592 (YLCL…RLIH), 598–620 (YECE…QRIH), and 626–649 (YSCL…RARH). Residues 669 to 705 (TAAAQKAQSHNPEQQDNDVAGGASTSDVPSGSGFMST) are disordered. Positions 691–705 (ASTSDVPSGSGFMST) are enriched in polar residues.

Interacts with comr. As to expression, expressed in testis; primary spermatocytes.

The protein localises to the nucleus. In terms of biological role, required for male meiotic division and spermatid differentiation. Required for accumulation of aly and comr on chromatin. May function as a transcription factor. The protein is Testis-specific zinc finger protein topi (topi) of Drosophila melanogaster (Fruit fly).